Consider the following 294-residue polypeptide: Thymidylate synthase (294 aa).

DUMP contacts are provided by residues arginine 31 and 156 to 157 (RR). Catalysis depends on cysteine 176, which acts as the Nucleophile. Residues 196–199 (RSAD), asparagine 207, and 237–239 (HIY) contribute to the dUMP site. Aspartate 199 is a (6R)-5,10-methylene-5,6,7,8-tetrahydrofolate binding site. Alanine 293 is a (6R)-5,10-methylene-5,6,7,8-tetrahydrofolate binding site.

This sequence belongs to the thymidylate synthase family. Homodimer.

It carries out the reaction dUMP + (6R)-5,10-methylene-5,6,7,8-tetrahydrofolate = 7,8-dihydrofolate + dTMP. The protein operates within pyrimidine metabolism; dTTP biosynthesis. The polypeptide is Thymidylate synthase (70) (Saimiri sciureus (Common squirrel monkey)).